Here is a 46-residue protein sequence, read N- to C-terminus: Large ribosomal subunit protein bL36 (46 aa).

This sequence belongs to the bacterial ribosomal protein bL36 family.

This is Large ribosomal subunit protein bL36 from Klebsiella pneumoniae (strain 342).